The sequence spans 414 residues: Isocitrate dehydrogenase [NADP] cytoplasmic (414 aa).

At serine 2 the chain carries N-acetylserine. A Phosphotyrosine modification is found at tyrosine 42. 75–77 (TIT) is a binding site for NADP(+). Position 77 (threonine 77) interacts with substrate. Lysine 81 is subject to N6-acetyllysine. Arginine 82 contacts NADP(+). Substrate-binding positions include 94–100 (SPNGTIR) and arginine 109. Lysine 126 carries the post-translational modification N6-succinyllysine. Positions 132 and 212 each coordinate substrate. An N6-acetyllysine mark is found at lysine 224, lysine 233, and lysine 243. Aspartate 252 provides a ligand contact to Mn(2+). Lysine 260 contacts NADP(+). Mn(2+) contacts are provided by aspartate 275 and aspartate 279. 310 to 315 (GTVTRH) is an NADP(+) binding site. At lysine 321 the chain carries N6-acetyllysine. NADP(+) is bound at residue asparagine 328. Serine 389 carries the post-translational modification Phosphoserine. The residue at position 400 (lysine 400) is an N6-succinyllysine.

This sequence belongs to the isocitrate and isopropylmalate dehydrogenases family. As to quaternary structure, homodimer. Mg(2+) is required as a cofactor. The cofactor is Mn(2+). In terms of processing, the N-terminus is blocked. Post-translationally, acetylation at Lys-374 dramatically reduces catalytic activity. As to expression, ubiquitous.

It is found in the cytoplasm. The protein resides in the cytosol. Its subcellular location is the peroxisome. It catalyses the reaction D-threo-isocitrate + NADP(+) = 2-oxoglutarate + CO2 + NADPH. Its function is as follows. Catalyzes the NADP(+)-dependent oxidative decarboxylation of isocitrate (D-threo-isocitrate) to 2-ketoglutarate (2-oxoglutarate), which is required by other enzymes such as the phytanoyl-CoA dioxygenase. Plays a critical role in the generation of NADPH, an important cofactor in many biosynthesis pathways. May act as a corneal epithelial crystallin and may be involved in maintaining corneal epithelial transparency. The polypeptide is Isocitrate dehydrogenase [NADP] cytoplasmic (Idh1) (Rattus norvegicus (Rat)).